The sequence spans 913 residues: MTSRLRALGGRINNTRTSELPKEKTRSEVICSIRFLDGLVQTFKVNKQDLGQSLLDMAYGHLGVTEKEYFGLQHGDDPVDSPRWLEASKPLRKQLKGGFPCTLHFRVRYFIPDPNTLQQEQTRHLYFLQLKMDVCEGRLTCPLNSAVVLASYAVQSHFGDFNSSIHHPGYLADSQFIPDQNDDFLSKVESLHEQHSGLKQSEAESCYINIARTLDFYGVELHGGRDLHNLDLMIGIASAGIAVYRKYICTSFYPWVNILKISFKRKKFFIHQRQKQAESREHIVAFNMLNYRSCKNLWKSCVEHHSFFQAKKLLPQEKNVLSQYWTLGSRNPKKSVNNQYCKKVIGGMVWNPVMRRSLSVERLETKSLPSRSPPITPNWRSPRLRHEIRKPRHSSADNLANEMTYITETEDVFYTYKGPLSPKDSDSEVSQNHSPHRESLSENNPAQSCLTQKSSSSVSPSSNAPGSCSPDGVDQRFLEDYHKVTKGGFVEDASQYYCDKSDDGDGYLVLIRITPDEEGRFGFNLKGGVDQKMPLVVSRINPESPADTCMPKLNEGDQIVLINGRDISEHTHDQVVMFIKASRESHSRELALVIRRKAVRSLAEIRSEDELSQLFPEAMFPACPEGGDSLEGSMELLKKGLESGTVLIQFEQLYRKKPGLAVSFAKLPQNLDKNRYKDVLPYDTTRVLLQGNEDYINASYVNMEMPAANLVNKYIATQGPLPNTCAQFWQVVWDQKLSLVVMLTTLTERGRTKCHQYWPDPPDIMDHGIFHIQCQTEDCTIAYVSREMLVTNTETGEEHTVTHLQYVAWPDHGVPDDSSDFLEFVKYVRSLRVDGEPALVHCSAGIGRTGVLVTMETAMCLIERNLPVYPLDIVRKMRDQRAMMVQTSSQYKFVCEAILRVYEEGLVQRLDPS.

The 284-residue stretch at 29–312 (VICSIRFLDG…EHHSFFQAKK (284 aa)) folds into the FERM domain. Residues Ser-357, Ser-359, and Ser-367 each carry the phosphoserine modification. 2 disordered regions span residues 364–400 (ETKSLPSRSPPITPNWRSPRLRHEIRKPRHSSADNLA) and 417–473 (KGPL…PDGV). Thr-376 bears the Phosphothreonine mark. At Ser-381 the chain carries Phosphoserine. Positions 382–393 (PRLRHEIRKPRH) are enriched in basic residues. The residue at position 425 (Ser-425) is a Phosphoserine. Over residues 441–453 (SENNPAQSCLTQK) the composition is skewed to polar residues. A compositionally biased stretch (low complexity) spans 454–470 (SSSSVSPSSNAPGSCSP). The PDZ domain maps to 510 to 582 (LIRITPDEEG…DQVVMFIKAS (73 aa)). The Tyrosine-protein phosphatase domain occupies 646–901 (VLIQFEQLYR…KFVCEAILRV (256 aa)). Substrate-binding positions include Asp-811, 842–848 (CSAGIGR), and Gln-886. Cys-842 functions as the Phosphocysteine intermediate in the catalytic mechanism.

It belongs to the protein-tyrosine phosphatase family. Non-receptor class subfamily.

It is found in the cell membrane. Its subcellular location is the cytoplasm. It localises to the cytoskeleton. It catalyses the reaction O-phospho-L-tyrosyl-[protein] + H2O = L-tyrosyl-[protein] + phosphate. Its function is as follows. May act at junctions between the membrane and the cytoskeleton. This Mus musculus (Mouse) protein is Tyrosine-protein phosphatase non-receptor type 3 (Ptpn3).